Reading from the N-terminus, the 368-residue chain is Chaperone protein DnaJ (368 aa).

The region spanning Asp5–Gly70 is the J domain. The CR-type zinc-finger motif lies at Gly124–His201. Cys137, Cys140, Cys153, Cys156, Cys175, Cys178, Cys189, and Cys192 together coordinate Zn(2+). 4 CXXCXGXG motif repeats span residues Cys137–Gly144, Cys153–Gly160, Cys175–Gly182, and Cys189–Gly196.

Belongs to the DnaJ family. As to quaternary structure, homodimer. It depends on Zn(2+) as a cofactor.

It localises to the cytoplasm. Its function is as follows. Participates actively in the response to hyperosmotic and heat shock by preventing the aggregation of stress-denatured proteins and by disaggregating proteins, also in an autonomous, DnaK-independent fashion. Unfolded proteins bind initially to DnaJ; upon interaction with the DnaJ-bound protein, DnaK hydrolyzes its bound ATP, resulting in the formation of a stable complex. GrpE releases ADP from DnaK; ATP binding to DnaK triggers the release of the substrate protein, thus completing the reaction cycle. Several rounds of ATP-dependent interactions between DnaJ, DnaK and GrpE are required for fully efficient folding. Also involved, together with DnaK and GrpE, in the DNA replication of plasmids through activation of initiation proteins. The polypeptide is Chaperone protein DnaJ (Xylella fastidiosa (strain M23)).